The sequence spans 365 residues: Ferredoxin--NADP reductase, chloroplastic (365 aa).

The tract at residues 1–22 (MAAAVTAAVSFPSTKSTPLSTR) is disordered. The segment covering 11 to 22 (FPSTKSTPLSTR) has biased composition (polar residues). One can recognise an FAD-binding FR-type domain in the interval 86 to 208 (KNPYTGRCLL…TGPVGKEMLM (123 aa)). Residues 144–147 (RLYS), 165–167 (CVK), Tyr-171, 182–184 (VCS), and Thr-223 each bind FAD. Positions 147 and 167 each coordinate NADP(+). Residues Thr-223, 255–256 (VP), 285–286 (SR), Lys-295, 324–325 (GL), and Glu-363 contribute to the NADP(+) site.

Belongs to the ferredoxin--NADP reductase type 1 family. The cofactor is FAD.

The protein resides in the plastid. The protein localises to the chloroplast stroma. It localises to the chloroplast thylakoid membrane. It catalyses the reaction 2 reduced [2Fe-2S]-[ferredoxin] + NADP(+) + H(+) = 2 oxidized [2Fe-2S]-[ferredoxin] + NADPH. It functions in the pathway energy metabolism; photosynthesis. May play a key role in regulating the relative amounts of cyclic and non-cyclic electron flow to meet the demands of the plant for ATP and reducing power. In Mesembryanthemum crystallinum (Common ice plant), this protein is Ferredoxin--NADP reductase, chloroplastic (PETH).